The chain runs to 526 residues: Peptide chain release factor 3 (526 aa).

The 269-residue stretch at 9-277 (DKRRTFAIIS…GIVEWAPVPQ (269 aa)) folds into the tr-type G domain. GTP-binding positions include 18 to 25 (SHPDAGKT), 86 to 90 (DTPGH), and 140 to 143 (NKLD).

It belongs to the TRAFAC class translation factor GTPase superfamily. Classic translation factor GTPase family. PrfC subfamily.

It localises to the cytoplasm. Increases the formation of ribosomal termination complexes and stimulates activities of RF-1 and RF-2. It binds guanine nucleotides and has strong preference for UGA stop codons. It may interact directly with the ribosome. The stimulation of RF-1 and RF-2 is significantly reduced by GTP and GDP, but not by GMP. This is Peptide chain release factor 3 from Shewanella pealeana (strain ATCC 700345 / ANG-SQ1).